Here is a 431-residue protein sequence, read N- to C-terminus: Glucose-1-phosphate adenylyltransferase (431 aa).

A beta-D-fructose 1,6-bisphosphate-binding site is contributed by lysine 39. Residues arginine 40, histidine 46, and arginine 52 each contribute to the AMP site. Tyrosine 114 lines the alpha-D-glucose 1-phosphate pocket. Arginine 130 contacts AMP. Alpha-D-glucose 1-phosphate is bound by residues glycine 179, 194–195 (EK), and serine 212. AMP contacts are provided by glutamate 370 and arginine 386. Beta-D-fructose 1,6-bisphosphate-binding positions include 419–423 (REMLR) and 429–431 (QER).

Belongs to the bacterial/plant glucose-1-phosphate adenylyltransferase family. In terms of assembly, homotetramer.

The catalysed reaction is alpha-D-glucose 1-phosphate + ATP + H(+) = ADP-alpha-D-glucose + diphosphate. The protein operates within glycan biosynthesis; glycogen biosynthesis. Its activity is regulated as follows. Allosterically activated by fructose-1,6-bisphosphate (F16BP) and inhibited by AMP. Functionally, involved in the biosynthesis of ADP-glucose, a building block required for the elongation reactions to produce glycogen. Catalyzes the reaction between ATP and alpha-D-glucose 1-phosphate (G1P) to produce pyrophosphate and ADP-Glc. This is Glucose-1-phosphate adenylyltransferase from Shigella boydii serotype 18 (strain CDC 3083-94 / BS512).